The chain runs to 126 residues: Large ribosomal subunit protein bL17 (126 aa).

The protein belongs to the bacterial ribosomal protein bL17 family. As to quaternary structure, part of the 50S ribosomal subunit. Contacts protein L32.

The chain is Large ribosomal subunit protein bL17 from Vibrio parahaemolyticus serotype O3:K6 (strain RIMD 2210633).